Here is a 152-residue protein sequence, read N- to C-terminus: Protein NrdI (152 aa).

It belongs to the NrdI family.

Functionally, probably involved in ribonucleotide reductase function. The chain is Protein NrdI from Rhodococcus opacus (strain B4).